Reading from the N-terminus, the 205-residue chain is Recombination protein RecR (205 aa).

A C4-type zinc finger spans residues Cys64–Cys79. One can recognise a Toprim domain in the interval Thr87–Pro182.

The protein belongs to the RecR family.

May play a role in DNA repair. It seems to be involved in an RecBC-independent recombinational process of DNA repair. It may act with RecF and RecO. In Chloroflexus aggregans (strain MD-66 / DSM 9485), this protein is Recombination protein RecR.